The chain runs to 205 residues: uncharacterized protein (205 aa).

Residues 26–129 enclose the HD domain; that stretch reads DWHHVSRVAD…VQDADRLDAI (104 aa).

This is an uncharacterized protein from Bacillus subtilis (strain 168).